The following is a 347-amino-acid chain: GMP reductase (347 aa).

Position 108–131 (108–131 (ADFDKMKQILALSPSLKFICIDVA)) interacts with NADP(+). K(+)-binding residues include Gly181 and Gly183. Catalysis depends on Cys186, which acts as the Thioimidate intermediate. 216-239 (IVSDGGCSVPGDVAKAFGGGADFV) contacts NADP(+).

It belongs to the IMPDH/GMPR family. GuaC type 1 subfamily. In terms of assembly, homotetramer.

It catalyses the reaction IMP + NH4(+) + NADP(+) = GMP + NADPH + 2 H(+). In terms of biological role, catalyzes the irreversible NADPH-dependent deamination of GMP to IMP. It functions in the conversion of nucleobase, nucleoside and nucleotide derivatives of G to A nucleotides, and in maintaining the intracellular balance of A and G nucleotides. The chain is GMP reductase from Yersinia pestis bv. Antiqua (strain Antiqua).